The chain runs to 87 residues: Small ribosomal subunit protein uS15 (87 aa).

Belongs to the universal ribosomal protein uS15 family. In terms of assembly, part of the 30S ribosomal subunit. Forms a bridge to the 50S subunit in the 70S ribosome, contacting the 23S rRNA.

In terms of biological role, one of the primary rRNA binding proteins, it binds directly to 16S rRNA where it helps nucleate assembly of the platform of the 30S subunit by binding and bridging several RNA helices of the 16S rRNA. Forms an intersubunit bridge (bridge B4) with the 23S rRNA of the 50S subunit in the ribosome. The polypeptide is Small ribosomal subunit protein uS15 (Clostridium perfringens (strain ATCC 13124 / DSM 756 / JCM 1290 / NCIMB 6125 / NCTC 8237 / Type A)).